A 446-amino-acid polypeptide reads, in one-letter code: Nuclear envelope integral membrane protein 1 (446 aa).

An N-terminal signal peptide occupies residues 1–37 (MAGFMKYKSVSTTIETVRLKLILTAVLFLFPFSQTSG). Residues N62, N118, and N129 are each glycosylated (N-linked (GlcNAc...) asparagine). Helical transmembrane passes span 154 to 174 (IYLF…DVLS), 181 to 201 (YSAG…FIVY), 209 to 229 (PFYM…QLVF), 239 to 259 (HWHL…AVCY), and 269 to 289 (SINI…YAGI). A compositionally biased stretch (acidic residues) spans 410–431 (LFSTDEEDKEEEEDGWETEDDI). The interval 410–446 (LFSTDEEDKEEEEDGWETEDDIKPEVTSPRMNNTRGK) is disordered. The N-linked (GlcNAc...) asparagine glycan is linked to N441.

This sequence belongs to the NEMP family.

The protein resides in the nucleus inner membrane. Functionally, contributes to nuclear envelope stiffness in germ cells. Involved in male and female fertility. Essential for normal erythropoiesis. Required for efficient nuclear envelope opening and enucleation during the late stages of erythroblast maturation. The protein is Nuclear envelope integral membrane protein 1 of Danio rerio (Zebrafish).